A 214-amino-acid polypeptide reads, in one-letter code: Adenylate kinase (214 aa).

Residue 10-15 (GAGKGT) coordinates ATP. Residues 30 to 59 (STGDMFRDHKARGTEIGKQVQAIMDAGGLV) are NMP. Residues Thr31, Arg36, 57–59 (GLV), 85–88 (GYPR), and Gln92 each bind AMP. Positions 126-163 (GRRSCPRCGAVYHVSQNPPHRAGFCDRDDTALVQREDD) are LID. Arg127 contacts ATP. The Zn(2+) site is built by Cys130 and Cys133. 136–137 (VY) is an ATP binding site. Zn(2+)-binding residues include Cys150 and Asp153. Arg160 and Arg171 together coordinate AMP. Gly199 serves as a coordination point for ATP.

This sequence belongs to the adenylate kinase family. In terms of assembly, monomer.

It localises to the cytoplasm. It carries out the reaction AMP + ATP = 2 ADP. It participates in purine metabolism; AMP biosynthesis via salvage pathway; AMP from ADP: step 1/1. Functionally, catalyzes the reversible transfer of the terminal phosphate group between ATP and AMP. Plays an important role in cellular energy homeostasis and in adenine nucleotide metabolism. This is Adenylate kinase from Anaeromyxobacter sp. (strain K).